The chain runs to 132 residues: Fluoride-specific ion channel FluC (132 aa).

4 helical membrane passes run 5–25, 32–52, 70–90, and 105–125; these read LYIA…SGLV, TFPW…GFFA, FVMT…LQTL, and VVGS…AAVG. 2 residues coordinate Na(+): G77 and T80.

Belongs to the fluoride channel Fluc/FEX (TC 1.A.43) family.

The protein resides in the cell inner membrane. It catalyses the reaction fluoride(in) = fluoride(out). Na(+) is not transported, but it plays an essential structural role and its presence is essential for fluoride channel function. Functionally, fluoride-specific ion channel. Important for reducing fluoride concentration in the cell, thus reducing its toxicity. This Opitutus terrae (strain DSM 11246 / JCM 15787 / PB90-1) protein is Fluoride-specific ion channel FluC.